A 258-amino-acid polypeptide reads, in one-letter code: Leucyl/phenylalanyl-tRNA--protein transferase (258 aa).

Belongs to the L/F-transferase family.

Its subcellular location is the cytoplasm. It carries out the reaction N-terminal L-lysyl-[protein] + L-leucyl-tRNA(Leu) = N-terminal L-leucyl-L-lysyl-[protein] + tRNA(Leu) + H(+). The catalysed reaction is N-terminal L-arginyl-[protein] + L-leucyl-tRNA(Leu) = N-terminal L-leucyl-L-arginyl-[protein] + tRNA(Leu) + H(+). The enzyme catalyses L-phenylalanyl-tRNA(Phe) + an N-terminal L-alpha-aminoacyl-[protein] = an N-terminal L-phenylalanyl-L-alpha-aminoacyl-[protein] + tRNA(Phe). In terms of biological role, functions in the N-end rule pathway of protein degradation where it conjugates Leu, Phe and, less efficiently, Met from aminoacyl-tRNAs to the N-termini of proteins containing an N-terminal arginine or lysine. The protein is Leucyl/phenylalanyl-tRNA--protein transferase of Alkalilimnicola ehrlichii (strain ATCC BAA-1101 / DSM 17681 / MLHE-1).